Consider the following 445-residue polypeptide: Maltoporin 2 (445 aa).

The first 25 residues, 1–25 (MKMKAKWLPIAAAVTAALASQAAFA), serve as a signal peptide directing secretion.

This sequence belongs to the porin LamB (TC 1.B.3) family. As to quaternary structure, homotrimer formed of three 18-stranded antiparallel beta-barrels, containing three independent channels.

The protein localises to the cell outer membrane. The enzyme catalyses beta-maltose(in) = beta-maltose(out). Involved in the transport of maltose and maltodextrins. This chain is Maltoporin 2, found in Aeromonas salmonicida (strain A449).